Reading from the N-terminus, the 311-residue chain is Putative S-adenosyl-L-methionine-dependent methyltransferase MMAR_0358 (311 aa).

Residues aspartate 132 and 161 to 162 (DL) each bind S-adenosyl-L-methionine.

The protein belongs to the UPF0677 family.

Functionally, exhibits S-adenosyl-L-methionine-dependent methyltransferase activity. This Mycobacterium marinum (strain ATCC BAA-535 / M) protein is Putative S-adenosyl-L-methionine-dependent methyltransferase MMAR_0358.